The sequence spans 417 residues: NADH-quinone oxidoreductase subunit D (417 aa).

It belongs to the complex I 49 kDa subunit family. NDH-1 is composed of 14 different subunits. Subunits NuoB, C, D, E, F, and G constitute the peripheral sector of the complex.

Its subcellular location is the cell inner membrane. The catalysed reaction is a quinone + NADH + 5 H(+)(in) = a quinol + NAD(+) + 4 H(+)(out). Functionally, NDH-1 shuttles electrons from NADH, via FMN and iron-sulfur (Fe-S) centers, to quinones in the respiratory chain. The immediate electron acceptor for the enzyme in this species is believed to be ubiquinone. Couples the redox reaction to proton translocation (for every two electrons transferred, four hydrogen ions are translocated across the cytoplasmic membrane), and thus conserves the redox energy in a proton gradient. This is NADH-quinone oxidoreductase subunit D from Verminephrobacter eiseniae (strain EF01-2).